We begin with the raw amino-acid sequence, 248 residues long: UPF0246 protein FN1762 (248 aa).

This sequence belongs to the UPF0246 family.

This chain is UPF0246 protein FN1762, found in Fusobacterium nucleatum subsp. nucleatum (strain ATCC 25586 / DSM 15643 / BCRC 10681 / CIP 101130 / JCM 8532 / KCTC 2640 / LMG 13131 / VPI 4355).